The chain runs to 589 residues: MSRRLLPRAEKRRRRLEQRQQPDEQRRRSGAMVKMAAAGGGGGGGRYYGGGSEGGRAPKRLKTDNAGDQHGGGGGGGGGAGAAGGGGGGENYDDPHKTPASPVVHIRGLIDGVVEADLVEALQEFGPISYVVVMPKKRQALVEFEDVLGACNAVNYAADNQIYIAGHPAFVNYSTSQKISRPGDSDDSRSVNSVLLFTILNPIYSITTDVLYTICNPCGPVQRIVIFRKNGVQAMVEFDSVQSAQRAKASLNGADIYSGCCTLKIEYAKPTRLNVFKNDQDTWDYTNPNLSGQGDPGSNPNKRQRQPPLLGDHPAEYGGPHGGYHSHYHDEGYGPPPPHYEGRRMGPPVGGHRRGPSRYGPQYGHPPPPPPPPEYGPHADSPVLMVYGLDQSKMNCDRVFNVFCLYGNVEKVKFMKSKPGAAMVEMADGYAVDRAITHLNNNFMFGQKLNVCVSKQPAIMPGQSYGLEDGSCSYKDFSESRNNRFSTPEQAAKNRIQHPSNVLHFFNAPLEVTEENFFEICDELGVKRPSSVKVFSGKSERSSSGLLEWESKSDALETLGFLNHYQMKNPNGPYPYTLKLCFSTAQHAS.

The segment covering 1 to 16 has biased composition (basic residues); it reads MSRRLLPRAEKRRRRL. Positions 1-100 are disordered; sequence MSRRLLPRAE…NYDDPHKTPA (100 aa). Over residues 17-27 the composition is skewed to basic and acidic residues; it reads EQRQQPDEQRR. Residues 38–54 are compositionally biased toward gly residues; it reads AGGGGGGGRYYGGGSEG. Ser-52 carries the post-translational modification Phosphoserine. Residues Lys-59 and Lys-62 each participate in a glycyl lysine isopeptide (Lys-Gly) (interchain with G-Cter in SUMO2) cross-link. Residues 69–90 show a composition bias toward gly residues; sequence QHGGGGGGGGGAGAAGGGGGGE. Phosphoserine is present on Ser-101. The 75-residue stretch at 102 to 176 folds into the RRM 1 domain; it reads PVVHIRGLID…HPAFVNYSTS (75 aa). A Glycyl lysine isopeptide (Lys-Gly) (interchain with G-Cter in SUMO2) cross-link involves residue Lys-136. Residue Ser-185 is modified to Phosphoserine. One can recognise an RRM 2 domain in the interval 193–270; that stretch reads SVLLFTILNP…CTLKIEYAKP (78 aa). Lys-269 carries the post-translational modification N6-acetyllysine. Residues 284–301 are compositionally biased toward polar residues; it reads DYTNPNLSGQGDPGSNPN. Residues 284-378 are disordered; it reads DYTNPNLSGQ…PPPPPEYGPH (95 aa). Residues Ser-291 and Ser-298 each carry the phosphoserine modification. Lys-302 participates in a covalent cross-link: Glycyl lysine isopeptide (Lys-Gly) (interchain with G-Cter in SUMO2). Arg-354 and Arg-358 each carry asymmetric dimethylarginine. Positions 364 to 375 are enriched in pro residues; that stretch reads GHPPPPPPPPEY. Ser-381 carries the post-translational modification Phosphoserine. 2 consecutive RRM domains span residues 382–478 and 495–583; these read PVLM…KDFS and RIQH…LCFS. Ser-544 carries the phosphoserine; by CaMK4 modification. Residue Lys-568 forms a Glycyl lysine isopeptide (Lys-Gly) (interchain with G-Cter in SUMO2) linkage.

In terms of assembly, identified in a IGF2BP1-dependent mRNP granule complex containing untranslated mRNAs. Interacts with HNRNPLL. Interacts with APEX1; the interaction is DNA-dependent. Component of a complex with SETD2. Interacts with ELAVL1. Part of a transcription inhibitory ribonucleoprotein complex composed at least of the circular RNA circZNF827, ZNF827 and HNRNPK. Interacts with CHD8 in an RNA-dependent manner. In terms of processing, several isoelectric forms of the L protein are probably the results of post-translational modifications. Post-translationally, phosphorylation at Ser-544 by CaMK4 enhances interaction with a CaMK4-responsive RNA element (CaRRE1), and prevents inclusion of the stress axis-regulated exon (STREX) of the KCNMA1 potassium channel transcripts upon membrane depolarization.

The protein resides in the nucleus. It localises to the nucleoplasm. The protein localises to the cytoplasm. Functionally, splicing factor binding to exonic or intronic sites and acting as either an activator or repressor of exon inclusion. Exhibits a binding preference for CA-rich elements. Component of the heterogeneous nuclear ribonucleoprotein (hnRNP) complexes and associated with most nascent transcripts. Associates, together with APEX1, to the negative calcium responsive element (nCaRE) B2 of the APEX2 promoter. As part of a ribonucleoprotein complex composed at least of ZNF827, HNRNPK and the circular RNA circZNF827 that nucleates the complex on chromatin, may negatively regulate the transcription of genes involved in neuronal differentiation. Regulates alternative splicing of a core group of genes involved in neuronal differentiation, likely by mediating H3K36me3-coupled transcription elongation and co-transcriptional RNA processing via interaction with CHD8. The sequence is that of Heterogeneous nuclear ribonucleoprotein L (HNRNPL) from Homo sapiens (Human).